Here is a 214-residue protein sequence, read N- to C-terminus: MGQKTHPLGFRLGITQEHKSTWYANFNQYANILKEDDKIRTYIHTISKANSIANVRINRNGLNDQIQLNIETGKPGILVGDLGAGLETLLNNVKKFLPANRQLTINVLEVEKVDLDASLLADLVAEQLEKRIAFRRAIREALQRAQKQNVNGIKIQVSGRLNGAEIARSEWIREGRVPLQTLRADIDYATQEANTIYGVLGIKVWLFKSEILSK.

The KH type-2 domain occupies 39 to 111; it reads IRTYIHTISK…QLTINVLEVE (73 aa).

The protein belongs to the universal ribosomal protein uS3 family. In terms of assembly, part of the 30S ribosomal subunit.

It localises to the plastid. The protein localises to the chloroplast. The protein is Small ribosomal subunit protein uS3c (rps3) of Phaeodactylum tricornutum (strain CCAP 1055/1).